Consider the following 147-residue polypeptide: Microtubule-associated protein 1 light chain 3 gamma (147 aa).

Phosphoserine; by TBK1 is present on residues S93 and S96. A lipid anchor (Phosphatidylethanolamine amidated glycine; alternate) is attached at G126. A lipid anchor (Phosphatidylserine amidated glycine; alternate) is attached at G126. A propeptide spans 127-147 (CLESAAPRDGSSLEDRPCNPL) (removed in mature form).

Belongs to the ATG8 family. As to quaternary structure, 3 different light chains, LC1 (a cleavage product of MAP1B), LC2 (a cleavage product of MAP1A) and LC3 (produced by one of the MAP1LC3 genes), can associate with the MAP1A or MAP1B heavy chains. Interacts with TP53INP1 and TP53INP2. Interacts with CALCOCO2. Interacts with TECPR2. Interacts with TBC1D5. Found in a complex with UBQLN1 and UBQLN2. Interacts with UBQLN4 (via STI1 1 and 2 domains). Interacts with UBQLN1 in the presence of UBQLN4. Interacts with TRIM5. Interacts with ATG13. Interacts with MEFV and TRIM21. Interacts with WDR81; recruits MAP1LC3C to ubiquitinated protein aggregates in the aggrephagy process. Interacts with MOAP1 (via LIR motif). Interacts with reticulophagy regulators RETREG1, RETREG2 and RETREG3. Interacts with TAX1BP1. Interacts with IRGM. Interacts with SPART. In terms of processing, the precursor molecule is cleaved by ATG4 (ATG4A, ATG4B, ATG4C or ATG4D) to expose the glycine at the C-terminus and form the cytosolic form, LC3-I. The processed form is then activated by APG7L/ATG7, transferred to ATG3 and conjugated to phosphatidylethanolamine (PE) phospholipid to form the membrane-bound form, LC3-II. During non-canonical autophagy, the processed form is conjugated to phosphatidylserine (PS) phospholipid. ATG4 proteins also mediate the delipidation of PE-conjugated forms. In addition, ATG4B and ATG4D mediate delipidation of ATG8 proteins conjugated to PS during non-canonical autophagy. Post-translationally, (Microbial infection) The Legionella effector RavZ is a deconjugating enzyme that hydrolyzes the amide bond between the C-terminal glycine residue and an adjacent aromatic residue in ATG8 proteins conjugated to phosphatidylethanolamine (PE), producing an ATG8 protein that is resistant to reconjugation by the host machinery due to the cleavage of the reactive C-terminal glycine. RavZ is also able to mediate delipidation of ATG8 proteins conjugated to phosphatidylserine (PS). Phosphorylation at Ser-96 and Ser-98 by TBK1 prevents interaction with ATG4 (ATG4A, ATG4B, ATG4C or ATG4D). Phosphorylation by TBK1 on autophagosomes prevents their delipidation by ATG4 and premature removal from nascent autophagosomes. In terms of tissue distribution, most abundant in placenta, lung and ovary.

The protein localises to the cytoplasmic vesicle. It is found in the autophagosome membrane. It localises to the endomembrane system. Its subcellular location is the cytoplasm. The protein resides in the cytoskeleton. Ubiquitin-like modifier that plays a crucial role in antibacterial autophagy (xenophagy) through the selective binding of CALCOCO2. Recruits all ATG8 family members to infecting bacteria such as S.typhimurium. May also play a role in aggrephagy, the macroautophagic degradation of ubiquitinated and aggregated proteins. The protein is Microtubule-associated protein 1 light chain 3 gamma (MAP1LC3C) of Homo sapiens (Human).